Consider the following 569-residue polypeptide: Dihydroxy-acid dehydratase (569 aa).

Aspartate 80 contributes to the Mg(2+) binding site. Cysteine 121 serves as a coordination point for [2Fe-2S] cluster. The Mg(2+) site is built by aspartate 122 and lysine 123. The residue at position 123 (lysine 123) is an N6-carboxylysine. A [2Fe-2S] cluster-binding site is contributed by cysteine 194. Glutamate 446 serves as a coordination point for Mg(2+). Catalysis depends on serine 472, which acts as the Proton acceptor.

It belongs to the IlvD/Edd family. In terms of assembly, homodimer. The cofactor is [2Fe-2S] cluster. It depends on Mg(2+) as a cofactor.

It catalyses the reaction (2R)-2,3-dihydroxy-3-methylbutanoate = 3-methyl-2-oxobutanoate + H2O. It carries out the reaction (2R,3R)-2,3-dihydroxy-3-methylpentanoate = (S)-3-methyl-2-oxopentanoate + H2O. It participates in amino-acid biosynthesis; L-isoleucine biosynthesis; L-isoleucine from 2-oxobutanoate: step 3/4. The protein operates within amino-acid biosynthesis; L-valine biosynthesis; L-valine from pyruvate: step 3/4. Functions in the biosynthesis of branched-chain amino acids. Catalyzes the dehydration of (2R,3R)-2,3-dihydroxy-3-methylpentanoate (2,3-dihydroxy-3-methylvalerate) into 2-oxo-3-methylpentanoate (2-oxo-3-methylvalerate) and of (2R)-2,3-dihydroxy-3-methylbutanoate (2,3-dihydroxyisovalerate) into 2-oxo-3-methylbutanoate (2-oxoisovalerate), the penultimate precursor to L-isoleucine and L-valine, respectively. This Desulforudis audaxviator (strain MP104C) protein is Dihydroxy-acid dehydratase.